Consider the following 29-residue polypeptide: Sarcolamban B (29 aa).

Residues 7-27 (LFTTFLILAFLLFLLYAFYEA) form a helical membrane-spanning segment.

As to quaternary structure, interacts with SERCA. As to expression, strongly expressed in embryonic and larval somatic muscles and postembryonic heart.

It localises to the sarcoplasmic reticulum membrane. In terms of biological role, plays an essential role in the regulation of calcium transport at the sarcoplasmic reticulum (SR), which is secondarily required for regular muscle contraction. The protein is Sarcolamban B of Drosophila melanogaster (Fruit fly).